The chain runs to 391 residues: Ferrochelatase (391 aa).

Residues His196 and Glu281 each coordinate Fe cation.

The protein belongs to the ferrochelatase family.

It is found in the cytoplasm. It catalyses the reaction heme b + 2 H(+) = protoporphyrin IX + Fe(2+). Its pathway is porphyrin-containing compound metabolism; protoheme biosynthesis; protoheme from protoporphyrin-IX: step 1/1. Catalyzes the ferrous insertion into protoporphyrin IX. The polypeptide is Ferrochelatase (Prochlorococcus marinus (strain MIT 9301)).